The following is a 557-amino-acid chain: Aerobic glycerol-3-phosphate dehydrogenase (557 aa).

21–49 (DLVIIGGGITGAGIALDASERGMKVALVE) contributes to the FAD binding site.

Belongs to the FAD-dependent glycerol-3-phosphate dehydrogenase family. FAD is required as a cofactor.

It localises to the cytoplasm. It carries out the reaction a quinone + sn-glycerol 3-phosphate = dihydroxyacetone phosphate + a quinol. Its pathway is polyol metabolism; glycerol degradation via glycerol kinase pathway; glycerone phosphate from sn-glycerol 3-phosphate (aerobic route): step 1/1. This is Aerobic glycerol-3-phosphate dehydrogenase (glpD) from Staphylococcus aureus (strain MRSA252).